The sequence spans 534 residues: Probable DNA ligase (534 aa).

Residue Glu213 participates in ATP binding. Residue Lys215 is the N6-AMP-lysine intermediate of the active site. ATP-binding residues include Arg220, Arg235, Glu264, Phe303, Arg375, and Lys381.

This sequence belongs to the ATP-dependent DNA ligase family. The cofactor is Mg(2+).

The catalysed reaction is ATP + (deoxyribonucleotide)n-3'-hydroxyl + 5'-phospho-(deoxyribonucleotide)m = (deoxyribonucleotide)n+m + AMP + diphosphate.. DNA ligase that seals nicks in double-stranded DNA during DNA replication, DNA recombination and DNA repair. This Mycolicibacterium vanbaalenii (strain DSM 7251 / JCM 13017 / BCRC 16820 / KCTC 9966 / NRRL B-24157 / PYR-1) (Mycobacterium vanbaalenii) protein is Probable DNA ligase.